Consider the following 466-residue polypeptide: Asparagine--tRNA ligase (466 aa).

The protein belongs to the class-II aminoacyl-tRNA synthetase family. As to quaternary structure, homodimer.

It is found in the cytoplasm. The catalysed reaction is tRNA(Asn) + L-asparagine + ATP = L-asparaginyl-tRNA(Asn) + AMP + diphosphate + H(+). This is Asparagine--tRNA ligase from Aliivibrio fischeri (strain ATCC 700601 / ES114) (Vibrio fischeri).